The primary structure comprises 387 residues: 3-ketoacyl-CoA thiolase (387 aa).

Cysteine 91 serves as the catalytic Acyl-thioester intermediate. Catalysis depends on proton acceptor residues histidine 343 and cysteine 373.

The protein belongs to the thiolase-like superfamily. Thiolase family. Heterotetramer of two alpha chains (FadB) and two beta chains (FadA).

The protein localises to the cytoplasm. It catalyses the reaction an acyl-CoA + acetyl-CoA = a 3-oxoacyl-CoA + CoA. Its pathway is lipid metabolism; fatty acid beta-oxidation. Its function is as follows. Catalyzes the final step of fatty acid oxidation in which acetyl-CoA is released and the CoA ester of a fatty acid two carbons shorter is formed. The polypeptide is 3-ketoacyl-CoA thiolase (Cronobacter sakazakii (strain ATCC BAA-894) (Enterobacter sakazakii)).